A 691-amino-acid polypeptide reads, in one-letter code: WD repeat-containing protein 48 homolog (691 aa).

8 WD repeats span residues 27–82 (LHRS…PVQY), 88–130 (RHTD…YLDS), 133–168 (LHTD…NSNF), 180–219 (GCKN…KPMK), 222–261 (GHSD…NIAT), 264–303 (AHEE…KFQV), 306–347 (KEEA…QNSN), and 399–438 (SGAP…KVKE).

This sequence belongs to the WD repeat WDR48 family. As to quaternary structure, interacts with usp-46; the interaction increases the catalytic activity of usp-46 in the presence of wdr-20.

Together with wdr-20, binds to and stimulates the activity of the deubiquitinating enzyme usp-46, leading to deubiquitination and stabilization of the glr-1 glutamate receptor. In Caenorhabditis briggsae, this protein is WD repeat-containing protein 48 homolog (wdr-48).